We begin with the raw amino-acid sequence, 181 residues long: Large ribosomal subunit protein uL5 (181 aa).

It belongs to the universal ribosomal protein uL5 family. Part of the 50S ribosomal subunit; part of the 5S rRNA/L5/L18/L25 subcomplex. Contacts the 5S rRNA and the P site tRNA. Forms a bridge to the 30S subunit in the 70S ribosome.

This is one of the proteins that bind and probably mediate the attachment of the 5S RNA into the large ribosomal subunit, where it forms part of the central protuberance. In the 70S ribosome it contacts protein S13 of the 30S subunit (bridge B1b), connecting the 2 subunits; this bridge is implicated in subunit movement. Contacts the P site tRNA; the 5S rRNA and some of its associated proteins might help stabilize positioning of ribosome-bound tRNAs. The sequence is that of Large ribosomal subunit protein uL5 from Helicobacter pylori (strain Shi470).